We begin with the raw amino-acid sequence, 398 residues long: Abhydrolase domain-containing protein 2 (398 aa).

Over 1–4 (MSTA) the chain is Cytoplasmic. The chain crosses the membrane as a helical; Signal-anchor for type II membrane protein span at residues 5–22 (FLTLIAVIVCILFRILNV). Residues 23–398 (HSQPLKPSVW…MMHEVGKVAP (376 aa)) lie on the Extracellular side of the membrane. One can recognise an AB hydrolase-1 domain in the interval 113 to 365 (VAICPGIANS…HGGHLGFYEG (253 aa)). Catalysis depends on charge relay system residues S192, D328, and H359.

This sequence belongs to the AB hydrolase superfamily. AB hydrolase 4 family.

The protein resides in the membrane. This chain is Abhydrolase domain-containing protein 2 (Hydr2), found in Drosophila melanogaster (Fruit fly).